The following is a 69-amino-acid chain: Small ribosomal subunit protein bS21 (69 aa).

This sequence belongs to the bacterial ribosomal protein bS21 family.

The polypeptide is Small ribosomal subunit protein bS21 (rpsU) (Treponema pallidum (strain Nichols)).